The sequence spans 484 residues: Aspartyl/glutamyl-tRNA(Asn/Gln) amidotransferase subunit B (484 aa).

The protein belongs to the GatB/GatE family. GatB subfamily. As to quaternary structure, heterotrimer of A, B and C subunits.

It carries out the reaction L-glutamyl-tRNA(Gln) + L-glutamine + ATP + H2O = L-glutaminyl-tRNA(Gln) + L-glutamate + ADP + phosphate + H(+). It catalyses the reaction L-aspartyl-tRNA(Asn) + L-glutamine + ATP + H2O = L-asparaginyl-tRNA(Asn) + L-glutamate + ADP + phosphate + 2 H(+). Its function is as follows. Allows the formation of correctly charged Asn-tRNA(Asn) or Gln-tRNA(Gln) through the transamidation of misacylated Asp-tRNA(Asn) or Glu-tRNA(Gln) in organisms which lack either or both of asparaginyl-tRNA or glutaminyl-tRNA synthetases. The reaction takes place in the presence of glutamine and ATP through an activated phospho-Asp-tRNA(Asn) or phospho-Glu-tRNA(Gln). The sequence is that of Aspartyl/glutamyl-tRNA(Asn/Gln) amidotransferase subunit B from Anaeromyxobacter dehalogenans (strain 2CP-C).